A 327-amino-acid polypeptide reads, in one-letter code: uncharacterized protein (327 aa).

Positions 12–79 (KRLDEFLAKE…LKKELDLEIE (68 aa)) constitute an S4 RNA-binding domain. Asp136 is a catalytic residue.

This sequence belongs to the pseudouridine synthase RluA family.

It catalyses the reaction a uridine in RNA = a pseudouridine in RNA. This is an uncharacterized protein from Helicobacter pylori (strain ATCC 700392 / 26695) (Campylobacter pylori).